The following is a 291-amino-acid chain: Pantothenate synthetase (291 aa).

30–37 provides a ligand contact to ATP; that stretch reads MGNLHEGH. H37 (proton donor) is an active-site residue. Q61 serves as a coordination point for (R)-pantoate. Residue Q61 participates in beta-alanine binding. 149–152 contributes to the ATP binding site; sequence GEKD. Q155 is a (R)-pantoate binding site. Residues V178 and 186 to 189 each bind ATP; that span reads MSSR.

This sequence belongs to the pantothenate synthetase family. As to quaternary structure, homodimer.

It localises to the cytoplasm. The catalysed reaction is (R)-pantoate + beta-alanine + ATP = (R)-pantothenate + AMP + diphosphate + H(+). The protein operates within cofactor biosynthesis; (R)-pantothenate biosynthesis; (R)-pantothenate from (R)-pantoate and beta-alanine: step 1/1. Catalyzes the condensation of pantoate with beta-alanine in an ATP-dependent reaction via a pantoyl-adenylate intermediate. The polypeptide is Pantothenate synthetase (Aliivibrio fischeri (strain ATCC 700601 / ES114) (Vibrio fischeri)).